We begin with the raw amino-acid sequence, 513 residues long: Glutamate--tRNA ligase 2 (513 aa).

The 'HIGH' region motif lies at 11 to 21; that stretch reads PSPTGFLHIGS. Positions 240 to 244 match the 'KMSKS' region motif; that stretch reads KLSKR. Residue lysine 243 coordinates ATP.

It belongs to the class-I aminoacyl-tRNA synthetase family. Glutamate--tRNA ligase type 1 subfamily. Monomer.

The protein localises to the cytoplasm. The catalysed reaction is tRNA(Glu) + L-glutamate + ATP = L-glutamyl-tRNA(Glu) + AMP + diphosphate. Its function is as follows. Catalyzes the attachment of glutamate to tRNA(Glu) in a two-step reaction: glutamate is first activated by ATP to form Glu-AMP and then transferred to the acceptor end of tRNA(Glu). The protein is Glutamate--tRNA ligase 2 of Rickettsia rickettsii (strain Iowa).